The chain runs to 435 residues: MVDHSAALFNKAQNYMPGGVNSPVRAFGAVGGVPRFIKKASGPYLIDVDEKKYIDYVGSWGPMILGHAHPAVIQAAQEAVQNGLSFGAPCENEIKLAALIGEFMPSIEKVRMVNSGTEATMSALRLARGVTGRSKIIKFEGCYHGHADCLLVNAGSGALTFGMPSSPGVPLGTVQDTLTATFNDLDSVAALFEKYSKDIAAIIVEPIAGNMNLIPAAPDFLTGLRELCNQYGSLLIFDEVITGFRVAKGGAQSLYNIRPDLTALGKIIGGGMPVGAYGGRREIMNQLSPEGPVYQAGTLSGNPVAMAAGLATLKELTAENFYSNLKEKTERLVMGILSRAKAAKIPLTANFSCGIFGLIFTSEGRVTRYAQAVNGNVEHFRSFFHKMLDNGVYLAPSAFESGFISAAHTNKEVDKTLDIIENIFSVSETYLRISV.

Lysine 266 carries the post-translational modification N6-(pyridoxal phosphate)lysine.

This sequence belongs to the class-III pyridoxal-phosphate-dependent aminotransferase family. HemL subfamily. In terms of assembly, homodimer. Pyridoxal 5'-phosphate serves as cofactor.

Its subcellular location is the cytoplasm. The enzyme catalyses (S)-4-amino-5-oxopentanoate = 5-aminolevulinate. Its pathway is porphyrin-containing compound metabolism; protoporphyrin-IX biosynthesis; 5-aminolevulinate from L-glutamyl-tRNA(Glu): step 2/2. This chain is Glutamate-1-semialdehyde 2,1-aminomutase, found in Coxiella burnetii (strain CbuG_Q212) (Coxiella burnetii (strain Q212)).